Here is a 217-residue protein sequence, read N- to C-terminus: Uracil-DNA glycosylase (217 aa).

Catalysis depends on Asp62, which acts as the Proton acceptor.

It belongs to the uracil-DNA glycosylase (UDG) superfamily. UNG family.

It is found in the cytoplasm. The catalysed reaction is Hydrolyzes single-stranded DNA or mismatched double-stranded DNA and polynucleotides, releasing free uracil.. Functionally, excises uracil residues from the DNA which can arise as a result of misincorporation of dUMP residues by DNA polymerase or due to deamination of cytosine. The sequence is that of Uracil-DNA glycosylase from Streptococcus pyogenes serotype M4 (strain MGAS10750).